Consider the following 399-residue polypeptide: Elongation factor Tu (399 aa).

A tr-type G domain is found at 10–209 (KPHVNIGTIG…AVDEYIPEPT (200 aa)). Residues 19 to 26 (GHVDHGKT) are G1. 19–26 (GHVDHGKT) contributes to the GTP binding site. T26 lines the Mg(2+) pocket. Residues 60 to 64 (GITIA) are G2. The G3 stretch occupies residues 81 to 84 (DCPG). GTP-binding positions include 81–85 (DCPGH) and 136–139 (NKED). Residues 136 to 139 (NKED) are G4. Residues 174-176 (SAK) are G5.

The protein belongs to the TRAFAC class translation factor GTPase superfamily. Classic translation factor GTPase family. EF-Tu/EF-1A subfamily. In terms of assembly, monomer.

It localises to the cytoplasm. The enzyme catalyses GTP + H2O = GDP + phosphate + H(+). GTP hydrolase that promotes the GTP-dependent binding of aminoacyl-tRNA to the A-site of ribosomes during protein biosynthesis. This is Elongation factor Tu from Sulfurimonas denitrificans (strain ATCC 33889 / DSM 1251) (Thiomicrospira denitrificans (strain ATCC 33889 / DSM 1251)).